A 187-amino-acid polypeptide reads, in one-letter code: Elongation factor P (187 aa).

It belongs to the elongation factor P family.

The protein localises to the cytoplasm. The protein operates within protein biosynthesis; polypeptide chain elongation. Functionally, involved in peptide bond synthesis. Stimulates efficient translation and peptide-bond synthesis on native or reconstituted 70S ribosomes in vitro. Probably functions indirectly by altering the affinity of the ribosome for aminoacyl-tRNA, thus increasing their reactivity as acceptors for peptidyl transferase. In Brachyspira hyodysenteriae (strain ATCC 49526 / WA1), this protein is Elongation factor P.